A 536-amino-acid polypeptide reads, in one-letter code: Membrane protein insertase YidC (536 aa).

Helical transmembrane passes span L7–F27, F332–V352, M411–F431, L449–L469, and F488–W508.

The protein belongs to the OXA1/ALB3/YidC family. Type 1 subfamily. Interacts with the Sec translocase complex via SecD. Specifically interacts with transmembrane segments of nascent integral membrane proteins during membrane integration.

The protein localises to the cell inner membrane. In terms of biological role, required for the insertion and/or proper folding and/or complex formation of integral membrane proteins into the membrane. Involved in integration of membrane proteins that insert both dependently and independently of the Sec translocase complex, as well as at least some lipoproteins. Aids folding of multispanning membrane proteins. The protein is Membrane protein insertase YidC of Haemophilus ducreyi (strain 35000HP / ATCC 700724).